The chain runs to 260 residues: uncharacterized protein (260 aa).

Positions 8–166 (LALGSGGARG…VDRIPVSVVK (159 aa)) constitute a PNPLA domain. A GXSXG motif is present at residues 39-43 (GSSMG). S41 functions as the Nucleophile in the catalytic mechanism. The active-site Proton acceptor is the D153. A DGA/G motif is present at residues 153–155 (DGA).

The protein belongs to the NTE family.

This is an uncharacterized protein from Bacillus subtilis (strain 168).